Consider the following 214-residue polypeptide: Leucyl/phenylalanyl-tRNA--protein transferase (214 aa).

Residues 194–214 are disordered; sequence FAPPGYSPDPASVVQRSSQTS.

Belongs to the L/F-transferase family.

Its subcellular location is the cytoplasm. It carries out the reaction N-terminal L-lysyl-[protein] + L-leucyl-tRNA(Leu) = N-terminal L-leucyl-L-lysyl-[protein] + tRNA(Leu) + H(+). It catalyses the reaction N-terminal L-arginyl-[protein] + L-leucyl-tRNA(Leu) = N-terminal L-leucyl-L-arginyl-[protein] + tRNA(Leu) + H(+). The enzyme catalyses L-phenylalanyl-tRNA(Phe) + an N-terminal L-alpha-aminoacyl-[protein] = an N-terminal L-phenylalanyl-L-alpha-aminoacyl-[protein] + tRNA(Phe). In terms of biological role, functions in the N-end rule pathway of protein degradation where it conjugates Leu, Phe and, less efficiently, Met from aminoacyl-tRNAs to the N-termini of proteins containing an N-terminal arginine or lysine. This Cereibacter sphaeroides (strain ATCC 17025 / ATH 2.4.3) (Rhodobacter sphaeroides) protein is Leucyl/phenylalanyl-tRNA--protein transferase.